Reading from the N-terminus, the 183-residue chain is Bifunctional protein PyrR (183 aa).

The PRPP-binding motif lies at 100–112; that stretch reads VILVDDVLYTGRT.

Belongs to the purine/pyrimidine phosphoribosyltransferase family. PyrR subfamily.

It catalyses the reaction UMP + diphosphate = 5-phospho-alpha-D-ribose 1-diphosphate + uracil. In terms of biological role, regulates the transcription of the pyrimidine nucleotide (pyr) operon in response to exogenous pyrimidines. Functionally, also displays a weak uracil phosphoribosyltransferase activity which is not physiologically significant. This is Bifunctional protein PyrR from Deinococcus deserti (strain DSM 17065 / CIP 109153 / LMG 22923 / VCD115).